Consider the following 289-residue polypeptide: Glucose and ribitol dehydrogenase homolog 2 (289 aa).

The segment at 1 to 32 (MASGFPPQKQETQPGIQHVMEPTPEFSSSNYK) is disordered. 43–67 (LVTGGDSGIGKAVCHCYALEGASVA) contacts NAD(+). Ser-180 is a binding site for substrate. Residue Tyr-193 is the Proton acceptor of the active site.

The protein belongs to the short-chain dehydrogenases/reductases (SDR) family.

May act as a short alcohol-polyol-sugar dehydrogenase possibly related to carbohydrate metabolism and the acquisition of desiccation tolerance. May also be involved in signal transduction. The sequence is that of Glucose and ribitol dehydrogenase homolog 2 from Arabidopsis thaliana (Mouse-ear cress).